The sequence spans 148 residues: uncharacterized protein (148 aa).

The interval 122–148 (HNWRKRMGTRRGRHEQSPTSRPRKGPD) is disordered. Residues 123-134 (NWRKRMGTRRGR) show a composition bias toward basic residues.

This is an uncharacterized protein from Homo sapiens (Human).